Consider the following 120-residue polypeptide: Aspartate 1-decarboxylase (120 aa).

The active-site Schiff-base intermediate with substrate; via pyruvic acid is serine 25. At serine 25 the chain carries Pyruvic acid (Ser). Threonine 57 is a substrate binding site. The active-site Proton donor is tyrosine 58. Residue 73–75 participates in substrate binding; sequence GAA.

This sequence belongs to the PanD family. As to quaternary structure, heterooctamer of four alpha and four beta subunits. Pyruvate is required as a cofactor. In terms of processing, is synthesized initially as an inactive proenzyme, which is activated by self-cleavage at a specific serine bond to produce a beta-subunit with a hydroxyl group at its C-terminus and an alpha-subunit with a pyruvoyl group at its N-terminus.

It is found in the cytoplasm. The enzyme catalyses L-aspartate + H(+) = beta-alanine + CO2. It functions in the pathway cofactor biosynthesis; (R)-pantothenate biosynthesis; beta-alanine from L-aspartate: step 1/1. Its function is as follows. Catalyzes the pyruvoyl-dependent decarboxylation of aspartate to produce beta-alanine. This is Aspartate 1-decarboxylase from Thermosipho africanus (strain TCF52B).